A 364-amino-acid chain; its full sequence is Chorismate synthase (364 aa).

The segment at 41–60 (MQHDLDRRRPGTSRYTTARR) is disordered. NADP(+) contacts are provided by Arg48 and Arg54. FMN-binding positions include 125 to 127 (RSS), 238 to 239 (NA), Gly278, 293 to 297 (KPTSS), and Arg319.

The protein belongs to the chorismate synthase family. In terms of assembly, homotetramer. The cofactor is FMNH2.

The enzyme catalyses 5-O-(1-carboxyvinyl)-3-phosphoshikimate = chorismate + phosphate. It participates in metabolic intermediate biosynthesis; chorismate biosynthesis; chorismate from D-erythrose 4-phosphate and phosphoenolpyruvate: step 7/7. In terms of biological role, catalyzes the anti-1,4-elimination of the C-3 phosphate and the C-6 proR hydrogen from 5-enolpyruvylshikimate-3-phosphate (EPSP) to yield chorismate, which is the branch point compound that serves as the starting substrate for the three terminal pathways of aromatic amino acid biosynthesis. This reaction introduces a second double bond into the aromatic ring system. The sequence is that of Chorismate synthase from Shewanella baltica (strain OS185).